The primary structure comprises 224 residues: Synaptogyrin-2 (224 aa).

At methionine 1 the chain carries N-acetylmethionine. The residue at position 3 (serine 3) is a Phosphoserine. The region spanning 20–171 (FLSQPQVVTR…LASLAYQRYK (152 aa)) is the MARVEL domain. 4 helical membrane passes run 31-51 (VSMV…YTNI), 72-92 (SAIG…DAFF), 105-125 (VIGD…GFCF), and 147-167 (AAIT…SLAY).

Belongs to the synaptogyrin family. Post-translationally, may be tyrosine phosphorylated by Src.

It localises to the cytoplasmic vesicle membrane. It is found in the cytoplasmic vesicle. The protein resides in the secretory vesicle. The protein localises to the synaptic vesicle membrane. Its function is as follows. May play a role in regulated exocytosis. In neuronal cells, modulates the localization of synaptophysin/SYP into synaptic-like microvesicles and may therefore play a role in the formation and/or the maturation of this vesicles. May also play a role in GLUT4 storage and transport to the plasma membrane. In Mus musculus (Mouse), this protein is Synaptogyrin-2.